A 463-amino-acid chain; its full sequence is Mitochondrial dynamics protein MIEF1 (463 aa).

The Mitochondrial intermembrane portion of the chain corresponds to 1 to 23; sequence MAGAGERKGKKDDNGIGTAIDFV. The chain crosses the membrane as a helical span at residues 24–46; sequence LSNARLVLGVGGAAMLGIATLAV. Residues 47 to 463 lie on the Cytoplasmic side of the membrane; that stretch reads KRMYDRAISA…LSEPEVLLQT (417 aa). The tract at residues 49–195 is dimerization; it reads MYDRAISAPT…LSGSLYDDLQ (147 aa). Residues serine 55, serine 59, serine 79, and serine 94 each carry the phosphoserine modification. A disordered region spans residues 57-77; that stretch reads PTSPTRLSHSGKRSWEEPNWM. A disordered region spans residues 96 to 123; the sequence is QTLPTDSSTFDTDTFCPPRPKPVARKGQ. Residues 100 to 110 are compositionally biased toward low complexity; sequence TDSSTFDTDTF. Residues 160–169 are important for interaction with DNM1L; sequence AAVDICAELR. Residues serine 187, serine 189, and histidine 201 each contribute to the ADP site. The important for interaction with DNM1L stretch occupies residues 234 to 242; the sequence is RRENPEYFP. The ADP site is built by serine 340, arginine 342, and lysine 368.

This sequence belongs to the SMCR7 family. In terms of assembly, homodimer. Interacts with DNM1L. Expression is relatively high in heart, skeletal muscle, pancreas and kidney.

Its subcellular location is the mitochondrion outer membrane. Its function is as follows. Mitochondrial outer membrane protein which regulates mitochondrial fission/fusion dynamics. Promotes the recruitment and association of the fission mediator dynamin-related protein 1 (DNM1L) to the mitochondrial surface independently of the mitochondrial fission FIS1 and MFF proteins. Regulates DNM1L GTPase activity and DNM1L oligomerization. Binds ADP and can also bind GDP, although with lower affinity. Does not bind CDP, UDP, ATP, AMP or GTP. Inhibits DNM1L GTPase activity in the absence of bound ADP. Requires ADP to stimulate DNM1L GTPase activity and the assembly of DNM1L into long, oligomeric tubules with a spiral pattern, as opposed to the ring-like DNM1L oligomers observed in the absence of bound ADP. Does not require ADP for its function in recruiting DNM1L. This is Mitochondrial dynamics protein MIEF1 from Homo sapiens (Human).